The chain runs to 106 residues: MPRVVFIDEQSGEYAVDAQDGQSLMEVATQNGVPGIVAECGGSCVCATCRIEIEDAWVEIVGEANPDENDLLQSTGEPMTAGTRLSCQVFIDPSMDGLIVRVPLPA.

Residues 2-106 form the 2Fe-2S ferredoxin-type domain; that stretch reads PRVVFIDEQS…GLIVRVPLPA (105 aa). Cys-40, Cys-46, Cys-49, and Cys-87 together coordinate [2Fe-2S] cluster.

This sequence belongs to the adrenodoxin/putidaredoxin family. [2Fe-2S] cluster is required as a cofactor.

The oxidation of alpha-terpineol by cytochrome p450-TERP requires the participation of a flavoprotein, terpredoxin reductase, and an iron-sulfur protein, terpredoxin, to mediate the transfer of electrons from NADH to P450 for oxygen activation. The protein is Terpredoxin (terPB) of Pseudomonas sp.